The following is a 252-amino-acid chain: 5'-nucleotidase SurE (252 aa).

A divalent metal cation-binding residues include Asp-8, Asp-9, Ser-39, and Asn-95.

The protein belongs to the SurE nucleotidase family. A divalent metal cation is required as a cofactor.

The protein localises to the cytoplasm. It catalyses the reaction a ribonucleoside 5'-phosphate + H2O = a ribonucleoside + phosphate. In terms of biological role, nucleotidase that shows phosphatase activity on nucleoside 5'-monophosphates. The protein is 5'-nucleotidase SurE of Clostridium botulinum (strain Okra / Type B1).